Reading from the N-terminus, the 221-residue chain is Uracil-DNA glycosylase (221 aa).

The Proton acceptor role is filled by aspartate 65.

It belongs to the uracil-DNA glycosylase (UDG) superfamily. UNG family.

The protein localises to the cytoplasm. The enzyme catalyses Hydrolyzes single-stranded DNA or mismatched double-stranded DNA and polynucleotides, releasing free uracil.. In terms of biological role, excises uracil residues from the DNA which can arise as a result of misincorporation of dUMP residues by DNA polymerase or due to deamination of cytosine. The polypeptide is Uracil-DNA glycosylase (Christiangramia forsetii (strain DSM 17595 / CGMCC 1.15422 / KT0803) (Gramella forsetii)).